Reading from the N-terminus, the 423-residue chain is MLDLKYITENIDEVILKLNTRGGDFSHLRQLIDLQEERKSVIKEVEDLKAKRNEYSKEIGELKRQKQDASHVLLKVESIKSDIPALELKLGEIDEKINKELIVLPNIPADDVPVGKDESANIEIKKWGTIRHFDFEVKDHTQLGEALNILDFERATKITGPRFVVDKGLGARLERALINFMIDTHAYTHGYTEIIPPFIVNDKSMYATGQFPKFKEDAFKLEGFDWYLNPTAEVPTINLFRDEIIDNDALPIQYVAYTTAFRSEAGSAGRDTKGILRQHQFNKVELIKFARPEDSEQAHQDMLANSERILQLLNIPYRVVVLSTGDMGFGMSKTYDIEVWLPGQNMYREIGSISNARDFQARRANIRFKRSKDAKTEYVHTLNGSGLAVGRTMIAVLENYQNQDGSITIPEVLKPYMGVEVIK.

An L-serine-binding site is contributed by 231–233 (TAE). 262 to 264 (RSE) provides a ligand contact to ATP. Position 285 (Glu285) interacts with L-serine. ATP is bound at residue 349–352 (EIGS). L-serine is bound at residue Ser385.

It belongs to the class-II aminoacyl-tRNA synthetase family. Type-1 seryl-tRNA synthetase subfamily. Homodimer. The tRNA molecule binds across the dimer.

The protein localises to the cytoplasm. The catalysed reaction is tRNA(Ser) + L-serine + ATP = L-seryl-tRNA(Ser) + AMP + diphosphate + H(+). The enzyme catalyses tRNA(Sec) + L-serine + ATP = L-seryl-tRNA(Sec) + AMP + diphosphate + H(+). It functions in the pathway aminoacyl-tRNA biosynthesis; selenocysteinyl-tRNA(Sec) biosynthesis; L-seryl-tRNA(Sec) from L-serine and tRNA(Sec): step 1/1. In terms of biological role, catalyzes the attachment of serine to tRNA(Ser). Is also able to aminoacylate tRNA(Sec) with serine, to form the misacylated tRNA L-seryl-tRNA(Sec), which will be further converted into selenocysteinyl-tRNA(Sec). The polypeptide is Serine--tRNA ligase (Acholeplasma laidlawii (strain PG-8A)).